A 425-amino-acid chain; its full sequence is Dipeptidase tcpJ (425 aa).

The Zn(2+) site is built by His46, Asp48, and Glu158. Residues His185, Arg259, and Asp318 each contribute to the substrate site.

Belongs to the metallo-dependent hydrolases superfamily. Peptidase M19 family. Requires Zn(2+) as cofactor.

The catalysed reaction is an L-aminoacyl-L-amino acid + H2O = 2 an L-alpha-amino acid. Functionally, dipeptidase; part of the gene cluster that mediates the biosynthesis of an unusual class of epipolythiodioxopiperazines (ETPs) lacking the reactive thiol group important for toxicity. Firstly, L-tyrosine is prenylated by tcpD, before undergoing condensation with L-glycine in a reaction catalyzed by the NRPS tcpP leading to the diketopiperazine (DKP) backbone. Afterwards the alpha-carbon of tyrosine is oxidized by the cytochrome P450 tcpC to form a hydroxyl group. However, in contrast other ETP biosynthesis pathways studied so far, tcpC is not able to bishydroxylate the DKP at both alpha-carbon positions, but hydroxylates the alpha-carbon of the tyrosine part and the nitrogen of the glycine part. The next steps involve an alpha,beta-elimination reaction catalyzed by tcpI, a methylation by the methyltransferase tcpN the action of the four enzyme cascade tcpG/K/J/I. Due to a dysfunctional cytochrome P450 monooxygenase tcpC, the pathway leads to the biosynthesis of probable non-toxic metabolites lacking the reactive thiol group. The protein is Dipeptidase tcpJ of Claviceps purpurea (strain 20.1) (Ergot fungus).